Here is a 349-residue protein sequence, read N- to C-terminus: Probable formaldehyde dehydrogenase AdhA (349 aa).

Positions 44, 66, 97, 100, 103, 111, and 161 each coordinate Zn(2+).

The protein belongs to the zinc-containing alcohol dehydrogenase family. It depends on Zn(2+) as a cofactor.

Functionally, functions in the protection against aldehyde-stress. The sequence is that of Probable formaldehyde dehydrogenase AdhA (adhA) from Bacillus subtilis (strain 168).